Reading from the N-terminus, the 321-residue chain is Ubiquinone biosynthesis protein COQ4, mitochondrial (321 aa).

4 residues coordinate Zn(2+): H205, D206, H209, and E221.

The protein belongs to the COQ4 family. As to quaternary structure, component of a multi-subunit COQ enzyme complex, composed of at least COQ3, COQ4, COQ5, COQ6, COQ7 and COQ9. Zn(2+) serves as cofactor.

Its subcellular location is the mitochondrion inner membrane. It catalyses the reaction a 4-hydroxy-3-methoxy-5-(all-trans-polyprenyl)benzoate + H(+) = a 2-methoxy-6-(all-trans-polyprenyl)phenol + CO2. The protein operates within cofactor biosynthesis; ubiquinone biosynthesis. Lyase that catalyzes the C1-decarboxylation of 4-hydroxy-3-methoxy-5-(all-trans-polyprenyl)benzoic acid into 2-methoxy-6-(all-trans-polyprenyl)phenol during ubiquinone biosynthesis. This chain is Ubiquinone biosynthesis protein COQ4, mitochondrial, found in Candida tropicalis (strain ATCC MYA-3404 / T1) (Yeast).